A 1202-amino-acid polypeptide reads, in one-letter code: DNA-directed RNA polymerase subunit beta (1202 aa).

A disordered region spans residues 1154-1202 (NMDEDDDEVVNVDALAKYAEEHKADDKKNEEENKSEATSTTTDDKTNQN). A compositionally biased stretch (basic and acidic residues) spans 1171–1188 (YAEEHKADDKKNEEENKS).

Belongs to the RNA polymerase beta chain family. The RNAP catalytic core consists of 2 alpha, 1 beta, 1 beta' and 1 omega subunit. When a sigma factor is associated with the core the holoenzyme is formed, which can initiate transcription.

It catalyses the reaction RNA(n) + a ribonucleoside 5'-triphosphate = RNA(n+1) + diphosphate. Its function is as follows. DNA-dependent RNA polymerase catalyzes the transcription of DNA into RNA using the four ribonucleoside triphosphates as substrates. The sequence is that of DNA-directed RNA polymerase subunit beta from Limosilactobacillus reuteri (strain DSM 20016) (Lactobacillus reuteri).